Reading from the N-terminus, the 542-residue chain is Chaperonin GroEL 4 (542 aa).

Residues 30-33, K51, 87-91, G415, and D496 each bind ATP; these read TLGP and DGTTT.

It belongs to the chaperonin (HSP60) family. In terms of assembly, forms a cylinder of 14 subunits composed of two heptameric rings stacked back-to-back. Interacts with the co-chaperonin GroES.

The protein localises to the cytoplasm. The catalysed reaction is ATP + H2O + a folded polypeptide = ADP + phosphate + an unfolded polypeptide.. Together with its co-chaperonin GroES, plays an essential role in assisting protein folding. The GroEL-GroES system forms a nano-cage that allows encapsulation of the non-native substrate proteins and provides a physical environment optimized to promote and accelerate protein folding. This Rhizobium etli (strain ATCC 51251 / DSM 11541 / JCM 21823 / NBRC 15573 / CFN 42) protein is Chaperonin GroEL 4.